Consider the following 487-residue polypeptide: Vacuolar protein sorting-associated protein 30 (487 aa).

Residues 33 to 129 form a disordered region; the sequence is PQTLKKSSVP…DNPDAPMGSE (97 aa). The span at 52–62 shows a compositional bias: basic and acidic residues; the sequence is QSRKSIYDRVS. The segment covering 81–94 has biased composition (polar residues); the sequence is SSMSFVLLSESQMA. The stretch at 152–282 forms a coiled coil; that stretch reads VECTEMLVEG…DSQLLEKLQR (131 aa). Residues 283–480 form a BARA region; sequence SNVYNDTFCI…LAHASNVTSN (198 aa). The segment at 456 to 481 is required for membrane-association, autophagic function during starvation and normal autophagosome morphology; that stretch reads WTKACKLTLTCCKFLLAHASNVTSNA.

Belongs to the beclin family. In terms of assembly, component of the autophagy-specific VPS34 PI3-kinase complex I; and of the VPS34 PI3-kinase complex II.

The protein localises to the endosome membrane. It localises to the vacuole membrane. The protein resides in the preautophagosomal structure membrane. Required for cytoplasm to vacuole transport (Cvt), autophagy, nucleophagy, and mitophagy, as a part of the autophagy-specific VPS34 PI3-kinase complex I. This complex is essential to recruit the ATG8-phosphatidylinositol conjugate and the ATG12-ATG5 conjugate to the pre-autophagosomal structure. Also involved in endosome-to-Golgi retrograde transport as part of the VPS34 PI3-kinase complex II. Autophagy is required for proper vegetative growth, asexual/sexual reproduction, and full virulence. Autophagy is particularly involved in the biosynthesis of deoxynivalenol (DON), an important virulence determinant. This Gibberella zeae (strain ATCC MYA-4620 / CBS 123657 / FGSC 9075 / NRRL 31084 / PH-1) (Wheat head blight fungus) protein is Vacuolar protein sorting-associated protein 30.